The primary structure comprises 733 residues: MGKEKFHKSQHWGFCNNVRMLVGEDKPGIGGELLFGQKIKPKYSVFPKGMGTDSPSWVAFDKQVLSFDAYLEDEVPDKSQENYRIRRYKIYFYLEDDTVEVNEPVLQNSGLPQGIFIRRHRISLPPPNEDQFYTVHHFNVNTDIVFYGRTFKVYDCDAFTKNFLTKIGVKLNPPGQCPEDPYMKTRREKLDCMEPICPYESFDTLKQFLEYDRKVLRFFCVWDDSGSVFGDRRELILHYFLSDDTIEIKEVLPHNSGRDAMSLFLQRRKLPKYGPPGVYQPGQLTDQTVLNVYGGYSETRVYGFLLDKYQLGKLDQEFYKDTDLSIGTTINVWGRKVLLCDCDDFTKTYYRTKYGIENFTSIPCKAPSPPKIERKFPPYTGFGSEEDSLRSCIGLMPTPHQRNFKKFIEFDSYGNISNTLRFFAKLITHKCADVERMFVISYFLSDDTISVFEPIERNSGYTGGMFLKRVRVKKPGQEVFKSEFSEYIKAEELYVGAKVNVNGYLFFLVNADEYTLNYMERNSDKFPLSSIELVIQKLKEEECKSRELKQVFTAADCMHTKMVDFNTFREIMMNLTVGKLTDQEVITIARRYRVPEDPCPHRNVLVAQAHEQLKKNAFENFERLIAMCVYEDREKKKVLPSKDIKRLCKSSRLPLNEDLLGSLLSGFEDSEKQINYESFFCALNWRVNPVPVLEVASYIKERCEDEWLGMPSPIPVKYIYYLNLLKDVFGVDE.

DM10 domains are found at residues 61–168 (DKQV…TKIG), 212–354 (DRKV…RTKY), and 416–523 (ISNT…ERNS).

As to quaternary structure, microtubule inner protein component of sperm flagellar doublet microtubules. In terms of tissue distribution, expressed in trachea multiciliated cells.

It localises to the cytoplasm. The protein localises to the cytoskeleton. Its subcellular location is the cilium axoneme. The protein resides in the flagellum axoneme. Its function is as follows. Microtubule inner protein (MIP) part of the dynein-decorated doublet microtubules (DMTs) in cilia axoneme, which is required for motile cilia beating. This chain is EF-hand domain-containing family member C2 (EFHC2), found in Bos taurus (Bovine).